The chain runs to 178 residues: uncharacterized protein (178 aa).

2 helical membrane-spanning segments follow: residues 6 to 26 (AIFG…VSGL) and 154 to 174 (KELV…AMLI).

The protein localises to the cell membrane. This is an uncharacterized protein from Methanocaldococcus jannaschii (strain ATCC 43067 / DSM 2661 / JAL-1 / JCM 10045 / NBRC 100440) (Methanococcus jannaschii).